Reading from the N-terminus, the 129-residue chain is Thylakoid-associated single-stranded DNA-binding protein slr1034 (129 aa).

Residues 1–100 (MNSFVLMATV…LTASRISLVD (100 aa)) form the SSB domain. Residues 99 to 129 (VDSGNGINPGELSSPPEPEAVDLSNTDDIPF) form a disordered region.

Homotetramer.

The protein localises to the cellular thylakoid membrane. This chain is Thylakoid-associated single-stranded DNA-binding protein slr1034, found in Synechocystis sp. (strain ATCC 27184 / PCC 6803 / Kazusa).